The following is a 399-amino-acid chain: MAKEKYDRSKPHVNIGTIGHVDHGKTTLTAAITTVLARRLPSSVNQPKDYASIDAAPEERERAGITINTAHVEYETATRHYAHIDAPGHADYVKNMITGAAQMDGAILVVASTDGPMPQTREHILLSRQVGVKHLIVFMNKVDLVDDEELLELVEMEIRDLLSEYDFPGDDLPVIQGSALKALEGDTKFEDIIMELMDTVDSYIPEPERDTDKPLLLPVEDVFSITGRGTVASGRIDRGTVRVNDEIEIVGIKEETKKAVVTGVEMFRKQLDEGLAGDNVGILLRGVQRDEIERGQVIAKPGSINPHTKFKGEVYILSKDEGGRHTPFFNNYRPQFYFRTTDVTGSIELPAGTEMVMPGDNVTINVELIHPIAVEQGTTFSIREGGRTVGSGIVSEIEA.

Residues 10–208 form the tr-type G domain; sequence KPHVNIGTIG…TVDSYIPEPE (199 aa). The tract at residues 19–26 is G1; the sequence is GHVDHGKT. 19-26 contributes to the GTP binding site; it reads GHVDHGKT. T26 serves as a coordination point for Mg(2+). The segment at 64 to 68 is G2; the sequence is GITIN. The G3 stretch occupies residues 85–88; the sequence is DAPG. GTP contacts are provided by residues 85–89 and 140–143; these read DAPGH and NKVD. Positions 140–143 are G4; it reads NKVD. The G5 stretch occupies residues 178–180; that stretch reads SAL.

Belongs to the TRAFAC class translation factor GTPase superfamily. Classic translation factor GTPase family. EF-Tu/EF-1A subfamily. In terms of assembly, monomer.

The protein resides in the cytoplasm. It carries out the reaction GTP + H2O = GDP + phosphate + H(+). GTP hydrolase that promotes the GTP-dependent binding of aminoacyl-tRNA to the A-site of ribosomes during protein biosynthesis. This is Elongation factor Tu from Streptococcus pyogenes serotype M12 (strain MGAS2096).